The sequence spans 591 residues: Monoterpene synthase 8, chloroplastic (591 aa).

The N-terminal 46 residues, 1–46 (MSLLLAPPSYFPFRGLRRSTAAKQPPCLRLVKCTADRQSPEAARRS), are a transit peptide targeting the chloroplast. Residues aspartate 346, aspartate 350, and glutamate 497 each coordinate Mg(2+). Residues 346–350 (DDVYD) carry the DDXXD motif motif.

This sequence belongs to the terpene synthase family. Tpsa subfamily. It depends on Mg(2+) as a cofactor. Mn(2+) is required as a cofactor. Highly expressed in flowers, petals and sepals, but almost undetectable in vegetative organs.

The protein resides in the plastid. It is found in the chloroplast. It catalyses the reaction (2E)-geranyl diphosphate + H2O = (R)-linalool + diphosphate. The enzyme catalyses (2E)-geranyl diphosphate + H2O = (S)-linalool + diphosphate. The catalysed reaction is (2E,6E)-farnesyl diphosphate = (S)-beta-bisabolene + diphosphate. It carries out the reaction (2E,6E)-farnesyl diphosphate = (E,R)-alpha-bisabolene + diphosphate. It catalyses the reaction (2E,6E)-farnesyl diphosphate = (E)-beta-farnesene + diphosphate. The enzyme catalyses (2E,6E)-farnesyl diphosphate = beta-sesquiphellandrene + diphosphate. The catalysed reaction is (2E,6E)-farnesyl diphosphate = (1S,5S,6R)-alpha-bergamotene + diphosphate. The protein operates within secondary metabolite biosynthesis; terpenoid biosynthesis. Sesquiterpene and monoterpene synthase involved in the biosynthesis of volatile compounds present in floral scent. Mediates the conversion of (2E)-geranyl diphosphate (GPP) into linalool, with trace levels of myrcene, limonene and (Z)-beta-ocimene. Also acts as a sesquiterpene synthase by catalyzing the conversion of farnesyl diphosphate (FPP) to alpha-bergamotene and beta-bisabolene and to minor products including alpha-curcumene, cis-alpha-bisabolene, beta-farnesene and beta-sesquiphellandrene, as well as seven other unidentified sesquiterpenes. This is Monoterpene synthase 8, chloroplastic from Hedychium coronarium (White butterfly ginger-lily).